Consider the following 630-residue polypeptide: UvrABC system protein C (630 aa).

The tract at residues 1–96 is disordered; it reads MGAEGLQGEG…GEAHRRGGTG (96 aa). A compositionally biased stretch (low complexity) spans 9–28; the sequence is EGEVPPQGAGVPGQVQVGVH. Residues 52-125 form the GIY-YIG domain; that stretch reads DPRGLPVEAG…IKAHRPLYNV (74 aa). Residues 75 to 91 show a composition bias toward basic and acidic residues; the sequence is RPGEKLLPRRGQGEAHR. Residues 234–269 form the UVR domain; it reads DGLLQELEAKMREAARRLEFERAAEIRDQMEALRAF.

It belongs to the UvrC family. In terms of assembly, interacts with UvrB in an incision complex.

It is found in the cytoplasm. Its function is as follows. The UvrABC repair system catalyzes the recognition and processing of DNA lesions. UvrC both incises the 5' and 3' sides of the lesion. The N-terminal half is responsible for the 3' incision and the C-terminal half is responsible for the 5' incision. This chain is UvrABC system protein C, found in Thermus thermophilus (strain ATCC BAA-163 / DSM 7039 / HB27).